Consider the following 207-residue polypeptide: FMN-dependent NADH:quinone oxidoreductase (207 aa).

FMN is bound by residues serine 10, 16–18, 96–99, and 141–144; these read SIS, MYNL, and SRGG.

Belongs to the azoreductase type 1 family. As to quaternary structure, homodimer. FMN is required as a cofactor.

It catalyses the reaction 2 a quinone + NADH + H(+) = 2 a 1,4-benzosemiquinone + NAD(+). The catalysed reaction is N,N-dimethyl-1,4-phenylenediamine + anthranilate + 2 NAD(+) = 2-(4-dimethylaminophenyl)diazenylbenzoate + 2 NADH + 2 H(+). Quinone reductase that provides resistance to thiol-specific stress caused by electrophilic quinones. Functionally, also exhibits azoreductase activity. Catalyzes the reductive cleavage of the azo bond in aromatic azo compounds to the corresponding amines. The polypeptide is FMN-dependent NADH:quinone oxidoreductase (Nostoc sp. (strain PCC 7120 / SAG 25.82 / UTEX 2576)).